The following is a 180-amino-acid chain: Large ribosomal subunit protein uL5 (180 aa).

The protein belongs to the universal ribosomal protein uL5 family. Part of the 50S ribosomal subunit; part of the 5S rRNA/L5/L18/L25 subcomplex. Contacts the 5S rRNA and the P site tRNA. Forms a bridge to the 30S subunit in the 70S ribosome.

This is one of the proteins that bind and probably mediate the attachment of the 5S RNA into the large ribosomal subunit, where it forms part of the central protuberance. In the 70S ribosome it contacts protein S13 of the 30S subunit (bridge B1b), connecting the 2 subunits; this bridge is implicated in subunit movement. Contacts the P site tRNA; the 5S rRNA and some of its associated proteins might help stabilize positioning of ribosome-bound tRNAs. This Chloroflexus aggregans (strain MD-66 / DSM 9485) protein is Large ribosomal subunit protein uL5.